The sequence spans 187 residues: Peptidyl-tRNA hydrolase (187 aa).

Tyrosine 14 serves as a coordination point for tRNA. Residue histidine 19 is the Proton acceptor of the active site. 2 residues coordinate tRNA: tyrosine 63 and asparagine 65.

The protein belongs to the PTH family. In terms of assembly, monomer.

The protein resides in the cytoplasm. It carries out the reaction an N-acyl-L-alpha-aminoacyl-tRNA + H2O = an N-acyl-L-amino acid + a tRNA + H(+). Its function is as follows. Hydrolyzes ribosome-free peptidyl-tRNAs (with 1 or more amino acids incorporated), which drop off the ribosome during protein synthesis, or as a result of ribosome stalling. Functionally, catalyzes the release of premature peptidyl moieties from peptidyl-tRNA molecules trapped in stalled 50S ribosomal subunits, and thus maintains levels of free tRNAs and 50S ribosomes. The chain is Peptidyl-tRNA hydrolase from Thermodesulfovibrio yellowstonii (strain ATCC 51303 / DSM 11347 / YP87).